We begin with the raw amino-acid sequence, 478 residues long: Stromelysin-1 (478 aa).

The N-terminal stretch at 1-17 (MQNLPALLLFCGVVCSA) is a signal peptide. Residues 18–99 (YPVDRAAEDE…PRCGVPDVGD (82 aa)) constitute a propeptide, activation peptide. The Cysteine switch motif lies at 90 to 97 (PRCGVPDV). Cys92 is a binding site for Zn(2+). Positions 124 and 158 each coordinate Ca(2+). The Zn(2+) site is built by His168 and Asp170. Ca(2+) is bound by residues Asp175, Gly176, Gly178, and Val180. His183 is a binding site for Zn(2+). Ca(2+)-binding residues include Gly190 and Asp194. His196 is a binding site for Zn(2+). Residues Asp198, Asp199, and Glu201 each coordinate Ca(2+). Zn(2+) is bound at residue His218. Glu219 is an active-site residue. Residues His222 and His228 each coordinate Zn(2+). Residues 260–286 (QSLYGGPPSDSSNDPVVPTESVPPGPG) form a disordered region. Residues 266 to 277 (PPSDSSNDPVVP) show a composition bias toward low complexity. Hemopexin repeat units lie at residues 288–337 (PAAC…WPSL), 338–384 (PSGL…GFPP), 386–434 (VKKI…FPGV), and 435–478 (DSKV…WLNC). Cys291 and Cys478 are disulfide-bonded. Asp298 contacts Ca(2+). Residues Asp390 and Asp439 each contribute to the Ca(2+) site. N-linked (GlcNAc...) asparagine glycosylation is present at Asn452.

It belongs to the peptidase M10A family. Requires Ca(2+) as cofactor. Zn(2+) is required as a cofactor.

Its subcellular location is the secreted. It is found in the extracellular space. It localises to the extracellular matrix. The catalysed reaction is Preferential cleavage where P1', P2' and P3' are hydrophobic residues.. Metalloproteinase with a rather broad substrate specificity that can degrade fibronectin, laminin, gelatins of type I, III, IV, and V; collagens III, IV, X, and IX, and cartilage proteoglycans. Activates different molecules including growth factors, plasminogen or other matrix metalloproteinases such as MMP9. Once released into the extracellular matrix (ECM), the inactive pro-enzyme is activated by the plasmin cascade signaling pathway. Also acts intracellularly. For example, in dopaminergic neurons, gets activated by the serine protease HTRA2 upon stress and plays a pivotal role in DA neuronal degeneration by mediating microglial activation and alpha-synuclein/SNCA cleavage. In addition, plays a role in immune response and possesses antiviral activity against various viruses. Mechanistically, translocates from the cytoplasm into the cell nucleus upon virus infection to influence NF-kappa-B activities. The chain is Stromelysin-1 (MMP3) from Canis lupus familiaris (Dog).